Here is a 192-residue protein sequence, read N- to C-terminus: A-type ATP synthase subunit E (192 aa).

This sequence belongs to the V-ATPase E subunit family. In terms of assembly, has multiple subunits with at least A(3), B(3), C, D, E, F, H, I and proteolipid K(x).

It is found in the cell membrane. Component of the A-type ATP synthase that produces ATP from ADP in the presence of a proton gradient across the membrane. The chain is A-type ATP synthase subunit E from Halorubrum lacusprofundi (strain ATCC 49239 / DSM 5036 / JCM 8891 / ACAM 34).